Consider the following 145-residue polypeptide: MIKYFDKNNEVFNLIKDLTGRLNVEILEINIFRNKNNGKIQIVLYSKNFSLDIDFLTDLHKIILLILEANLKYGFTLELSTPGIDRKIKSDREFKIFEGKKIKLMLDNEFEEGFILESKPKSFIFKTDSKEVNVFYSDVKKARLV.

This sequence belongs to the RimP family.

It localises to the cytoplasm. Functionally, required for maturation of 30S ribosomal subunits. The sequence is that of Ribosome maturation factor RimP from Borreliella burgdorferi (strain ZS7) (Borrelia burgdorferi).